The chain runs to 408 residues: Argininosuccinate synthase (408 aa).

Residues 11–19 (AYSGGLDTS) and Ala-38 each bind ATP. L-citrulline is bound by residues Tyr-91 and Ser-96. Gly-121 is a binding site for ATP. Residues Thr-123, Asn-127, and Asp-128 each contribute to the L-aspartate site. Asn-127 lines the L-citrulline pocket. 5 residues coordinate L-citrulline: Arg-131, Ser-182, Ser-191, Glu-267, and Tyr-279.

This sequence belongs to the argininosuccinate synthase family. Type 1 subfamily. As to quaternary structure, homotetramer.

Its subcellular location is the cytoplasm. It catalyses the reaction L-citrulline + L-aspartate + ATP = 2-(N(omega)-L-arginino)succinate + AMP + diphosphate + H(+). The protein operates within amino-acid biosynthesis; L-arginine biosynthesis; L-arginine from L-ornithine and carbamoyl phosphate: step 2/3. The polypeptide is Argininosuccinate synthase (Zymomonas mobilis subsp. mobilis (strain ATCC 31821 / ZM4 / CP4)).